We begin with the raw amino-acid sequence, 739 residues long: AN1-type zinc finger protein 4 (739 aa).

Residues 54–129 form the Ubiquitin-like domain; the sequence is MELFIETLTG…LKLVLAMRGG (76 aa). Residues 246–255 show a composition bias toward basic residues; that stretch reads KPKKVVKVKP. 2 disordered regions span residues 246-270 and 287-316; these read KPKK…STAA and LPSG…RPVS. Residues 673-720 form an AN1-type zinc finger; it reads KKIMKHCFLCGKKTGLATSFECRCGNNFCASHRYAEAHGCTYDYKSAG. 8 residues coordinate Zn(2+): Cys-679, Cys-682, Cys-694, Cys-696, Cys-701, His-704, His-710, and Cys-712.

The protein is AN1-type zinc finger protein 4 (Zfand4) of Mus musculus (Mouse).